Reading from the N-terminus, the 93-residue chain is Acylphosphatase (93 aa).

Residues 5–93 enclose the Acylphosphatase-like domain; sequence TAILRVTGFV…EERKTFDIVY (89 aa). Active-site residues include R20 and N38.

It belongs to the acylphosphatase family.

The catalysed reaction is an acyl phosphate + H2O = a carboxylate + phosphate + H(+). The chain is Acylphosphatase (acyP) from Listeria monocytogenes serotype 4b (strain F2365).